The primary structure comprises 142 residues: Dromaiocalcin-1 (142 aa).

Disulfide bonds link C13–C24, C41–C138, and C113–C130. In terms of domain architecture, C-type lectin spans 20–139 (FRGNCYGYFR…CGERNAFICK (120 aa)).

It localises to the secreted. It is found in the extracellular space. The protein resides in the extracellular matrix. The protein is Dromaiocalcin-1 of Dromaius novaehollandiae (Emu).